We begin with the raw amino-acid sequence, 334 residues long: MNHPLRIHEIRLPWKHTPMNPHYAFVREQIVALLNELGLCEEEKEKDRRDGVITMGAYIYPDAGPNELLFGTLFVLWLFFFDDIFDESKFLKGESSQAAERTLQMFRTRQPPVNATTGLSMGIVQLEKLLLRIFKMAKDLAHGPYVISRFMETCEFYITEGAIPMDKFRFRKELPKLDEYLAVRTIDGAGEACIVCSEIVAHLALPEHIINEPRIKRMREITGQQIVYSNDIYSYHREKIHNNSVNALNIRCLTKSFNDALTDQINQVNEWVLEFEALKNSLYESTLWENNLDVYITGMENTMMGCKIWSESCTRYDLNALLHITPDKNEFPER.

Mg(2+) contacts are provided by D82 and D86. Residues 82–86 carry the D(D/E)XX(D/E) motif motif; it reads DDIFD. R184 is a substrate binding site. Mg(2+) is bound by residues N230, S234, and E238. The NSE motif motif lies at 230–238; that stretch reads NDIYSYHRE. The WxxxxxRY motif motif lies at 309 to 316; that stretch reads WSESCTRY.

It belongs to the terpene synthase family. Mg(2+) is required as a cofactor.

It carries out the reaction (2E,6E)-farnesyl diphosphate = gamma-muurolene + diphosphate. The catalysed reaction is (2E,6E)-farnesyl diphosphate = alpha-muurolene + diphosphate. It catalyses the reaction (2E,6E)-farnesyl diphosphate = (-)-(E)-beta-caryophyllene + diphosphate. The enzyme catalyses (2E)-geranyl diphosphate = beta-myrcene + diphosphate. Functionally, terpene synthase that catalyzes the cyclization of farnesyl diphosphate (FPP) into a mixture of sesquiterpenes with gamma-muurolene as the most abundant compound and (-)-beta-caryophyllene, alpha-muurolene, and 4 unidentified sesquiterpenes as minor compoundss. TPS1 also shows monoterpene synthase activity and can also use geranyl diphosphate (GPP) as a substrate to convert it into a mixture of cyclic and acyclic monoterpenes, including myrcene and linalool. P.polycephalum has a unique biology and these volatile terpenoids could function in internal communication of P.polycephalum, to mark the territory that have been explored, or they may be involved in chemotaxis. In Physarum polycephalum (Slime mold), this protein is Terpene synthase 1.